Here is a 106-residue protein sequence, read N- to C-terminus: L-rhamnose mutarotase (106 aa).

Tyr20 contributes to the substrate binding site. His24 serves as the catalytic Proton donor. Substrate-binding positions include Tyr43 and 78 to 79 (WW).

Belongs to the rhamnose mutarotase family. Homodimer.

The protein localises to the cytoplasm. The catalysed reaction is alpha-L-rhamnose = beta-L-rhamnose. The protein operates within carbohydrate metabolism; L-rhamnose metabolism. In terms of biological role, involved in the anomeric conversion of L-rhamnose. The sequence is that of L-rhamnose mutarotase from Rhizobium etli (strain ATCC 51251 / DSM 11541 / JCM 21823 / NBRC 15573 / CFN 42).